The chain runs to 90 residues: MFIALGIQLFVAVTYAAGKDDEHFSVDYCGMNCTQQEDGSWTACSGRNEECRCYHESGKKNGLCLSTTYIDFSQYGNPSDSDIAAASPRP.

Positions 1-18 (MFIALGIQLFVAVTYAAG) are cleaved as a signal peptide. Intrachain disulfides connect Cys-29–Cys-51, Cys-33–Cys-53, and Cys-44–Cys-64. Asn-32 carries an N-linked (GlcNAc...) asparagine glycan.

Its subcellular location is the secreted. In terms of biological role, salivary chemokine-binding protein which binds to host chemokines CXCL1, CXCL2, CXCL3, CXCL5 and CXCL8. This is Evasin P1128 from Ixodes ricinus (Common tick).